Here is a 591-residue protein sequence, read N- to C-terminus: Cineole synthase 1, chloroplastic (591 aa).

The N-terminal 44 residues, 1–44 (MSSLIMQVVIPKPAKFFHNNLFSLSSKRHRFSTTTTTRGGRWAR), are a transit peptide targeting the chloroplast. The (2E)-geranyl diphosphate site is built by Arg308, Asp345, Asp349, Arg486, and Asp489. Positions 345 and 349 each coordinate Mg(2+). A DDXXD motif motif is present at residues 345–349 (DDVFD). Asp489, Thr493, and Glu497 together coordinate Mg(2+).

It belongs to the terpene synthase family. Tpsb subfamily. As to quaternary structure, monomer. It depends on Mg(2+) as a cofactor. Requires Mn(2+) as cofactor.

It is found in the plastid. The protein resides in the chloroplast. The enzyme catalyses (2E)-geranyl diphosphate + H2O = 1,8-cineole + diphosphate. The catalysed reaction is (2E)-geranyl diphosphate = alpha-pinene + diphosphate. It carries out the reaction (2E)-geranyl diphosphate = beta-pinene + diphosphate. It catalyses the reaction (2E)-geranyl diphosphate + H2O = (S)-alpha-terpineol + diphosphate. The enzyme catalyses (2E)-geranyl diphosphate = beta-myrcene + diphosphate. The catalysed reaction is (2E)-geranyl diphosphate = sabinene + diphosphate. It functions in the pathway secondary metabolite biosynthesis; terpenoid biosynthesis. Monoterpene synthase (TPS) involved in the biosynthesis of monoterpene natural products, components of the chemical defense arsenal. Catalyzes the conversion of (2E)-geranyl diphosphate (GPP) into 1,8-cineole, and, as minor products, alpha-terpineol, beta-pinene, alpha-pinene, sabinene and myrcene. This chain is Cineole synthase 1, chloroplastic, found in Salvia fruticosa (Greek sage).